Reading from the N-terminus, the 124-residue chain is Kinocilin (124 aa).

2 consecutive transmembrane segments (helical) span residues 13-33 (LQLA…GVSV) and 40-60 (VGGI…YPFL). The interval 80–124 (PNSGPDHGEGRSSNNSNKEGARSGLSTVTRTLEKLKPGGRGTEEG) is disordered. Polar residues predominate over residues 90 to 109 (RSSNNSNKEGARSGLSTVTR). The span at 110 to 124 (TLEKLKPGGRGTEEG) shows a compositional bias: basic and acidic residues.

In terms of tissue distribution, preferentially expressed in the inner ear and testis. Localizes mainly in the kinocilium of sensory cells in the inner ear. Also present in the manchette of the spermatids, a transient structure enriched in interconnected microtubules (at protein level).

The protein localises to the membrane. In terms of biological role, may play a role in stabilizing dense microtubular networks or in vesicular trafficking. In Mus musculus (Mouse), this protein is Kinocilin (Kncn).